The following is a 100-amino-acid chain: Large ribosomal subunit protein bL28 (100 aa).

It belongs to the bacterial ribosomal protein bL28 family.

The protein is Large ribosomal subunit protein bL28 of Methylobacterium radiotolerans (strain ATCC 27329 / DSM 1819 / JCM 2831 / NBRC 15690 / NCIMB 10815 / 0-1).